A 218-amino-acid chain; its full sequence is Protein THO1 (218 aa).

In terms of domain architecture, SAP spans tyrosine 4–aspartate 38. Serine 22 is subject to Phosphoserine. Disordered regions lie at residues aspartate 37–glutamate 123 and leucine 177–arginine 218. The span at valine 47–glycine 57 shows a compositional bias: polar residues. Phosphoserine occurs at positions 58 and 68. Residues threonine 72–lysine 96 are compositionally biased toward basic and acidic residues. Composition is skewed to low complexity over residues serine 102–proline 122 and serine 186–serine 203. A compositionally biased stretch (basic residues) spans arginine 204 to arginine 218.

The protein belongs to the SAP domain-containing ribonucleoprotein family. In terms of assembly, interacts with SUB2 in the presence of RNA; this interaction facilitates RNA binding of SUB2.

Functionally, facilitates RNA binding of SUB2 and likely plays a role in mRNA export. Suppressor of the transcriptional defect of HPR1 by overexpression. In Saccharomyces cerevisiae (strain ATCC 204508 / S288c) (Baker's yeast), this protein is Protein THO1 (THO1).